The primary structure comprises 246 residues: Ribonuclease 3 (246 aa).

The region spanning 30 to 152 (ISWIEKNLGH…MIGAIFLESG (123 aa)) is the RNase III domain. Residue E65 coordinates Mg(2+). The active site involves D69. Residues D138 and E141 each coordinate Mg(2+). The active site involves E141. One can recognise a DRBM domain in the interval 177–246 (HPKSALQEWA…AQALLDILAQ (70 aa)).

This sequence belongs to the ribonuclease III family. In terms of assembly, homodimer. It depends on Mg(2+) as a cofactor.

It localises to the cytoplasm. It catalyses the reaction Endonucleolytic cleavage to 5'-phosphomonoester.. Digests double-stranded RNA. Involved in the processing of primary rRNA transcript to yield the immediate precursors to the large and small rRNAs (23S and 16S). Processes some mRNAs, and tRNAs when they are encoded in the rRNA operon. Processes pre-crRNA and tracrRNA of type II CRISPR loci if present in the organism. In Zymomonas mobilis subsp. mobilis (strain ATCC 31821 / ZM4 / CP4), this protein is Ribonuclease 3.